A 505-amino-acid chain; its full sequence is Maturase K (505 aa).

It belongs to the intron maturase 2 family. MatK subfamily.

The protein localises to the plastid. It localises to the chloroplast. Usually encoded in the trnK tRNA gene intron. Probably assists in splicing its own and other chloroplast group II introns. This chain is Maturase K, found in Ulmus parvifolia (Chinese elm).